The primary structure comprises 170 residues: Probable calcium-binding protein CML29 (170 aa).

EF-hand domains are found at residues 27-62 (SYIS…LGLD), 63-98 (KPEH…GQLG), and 138-170 (ASVE…AQLL). Residues D40, D42, D44, E51, D76, D78, D80, K82, E87, D151, D153, D155, and E162 each coordinate Ca(2+).

In terms of biological role, potential calcium sensor. The chain is Probable calcium-binding protein CML29 (CML29) from Oryza sativa subsp. japonica (Rice).